The primary structure comprises 339 residues: uncharacterized protein (339 aa).

The span at 1–12 (MDIDLNNQTDNN) shows a compositional bias: polar residues. Residues 1–30 (MDIDLNNQTDNNELIVEDTENPKNPNSTNI) form a disordered region.

This is an uncharacterized protein from Acanthamoeba polyphaga (Amoeba).